The following is a 309-amino-acid chain: GTP cyclohydrolase MptA (309 aa).

The protein belongs to the GTP cyclohydrolase IV family. As to quaternary structure, homodimer. It depends on Fe(2+) as a cofactor.

The catalysed reaction is GTP + H2O = 7,8-dihydroneopterin 2',3'-cyclic phosphate + formate + diphosphate + H(+). Its pathway is cofactor biosynthesis; 5,6,7,8-tetrahydromethanopterin biosynthesis. In terms of biological role, converts GTP to 7,8-dihydro-D-neopterin 2',3'-cyclic phosphate, the first intermediate in the biosynthesis of coenzyme methanopterin. The chain is GTP cyclohydrolase MptA from Haloarcula marismortui (strain ATCC 43049 / DSM 3752 / JCM 8966 / VKM B-1809) (Halobacterium marismortui).